A 494-amino-acid chain; its full sequence is Alpha-amylase-related protein (494 aa).

A signal peptide spans 1–20 (MFKFALALTLCLAGASLSLA). Glutamine 21 is subject to Pyrrolidone carboxylic acid. An intrachain disulfide couples cysteine 48 to cysteine 104. Positions 118, 169, and 178 each coordinate Ca(2+). Cysteine 157 and cysteine 171 are joined by a disulfide. Arginine 206 is a chloride binding site. The active-site Nucleophile is aspartate 208. A Ca(2+)-binding site is contributed by histidine 212. The active-site Proton donor is glutamate 245. Chloride-binding residues include asparagine 308 and arginine 343. Intrachain disulfides connect cysteine 376–cysteine 382, cysteine 418–cysteine 441, and cysteine 448–cysteine 460.

It belongs to the glycosyl hydrolase 13 family. Monomer. The cofactor is Ca(2+). Chloride serves as cofactor.

It is found in the secreted. The catalysed reaction is Endohydrolysis of (1-&gt;4)-alpha-D-glucosidic linkages in polysaccharides containing three or more (1-&gt;4)-alpha-linked D-glucose units.. The polypeptide is Alpha-amylase-related protein (Amyrel) (Drosophila dossoui (Fruit fly)).